We begin with the raw amino-acid sequence, 452 residues long: Pup--protein ligase (452 aa).

Glutamate 9 is a Mg(2+) binding site. Residue arginine 53 participates in ATP binding. Tyrosine 55 contributes to the Mg(2+) binding site. Catalysis depends on aspartate 57, which acts as the Proton acceptor. Glutamate 63 provides a ligand contact to Mg(2+). ATP is bound by residues threonine 66 and tryptophan 419.

The protein belongs to the Pup ligase/Pup deamidase family. Pup-conjugating enzyme subfamily.

It carries out the reaction ATP + [prokaryotic ubiquitin-like protein]-L-glutamate + [protein]-L-lysine = ADP + phosphate + N(6)-([prokaryotic ubiquitin-like protein]-gamma-L-glutamyl)-[protein]-L-lysine.. It functions in the pathway protein degradation; proteasomal Pup-dependent pathway. Its pathway is protein modification; protein pupylation. Catalyzes the covalent attachment of the prokaryotic ubiquitin-like protein modifier Pup to the proteasomal substrate proteins, thereby targeting them for proteasomal degradation. This tagging system is termed pupylation. The ligation reaction involves the side-chain carboxylate of the C-terminal glutamate of Pup and the side-chain amino group of a substrate lysine. The chain is Pup--protein ligase from Acidothermus cellulolyticus (strain ATCC 43068 / DSM 8971 / 11B).